A 557-amino-acid chain; its full sequence is Dihydroxy-acid dehydratase (557 aa).

Cysteine 50 is a [2Fe-2S] cluster binding site. Mg(2+) is bound at residue aspartate 82. Cysteine 123 serves as a coordination point for [2Fe-2S] cluster. Residues aspartate 124 and lysine 125 each contribute to the Mg(2+) site. N6-carboxylysine is present on lysine 125. Cysteine 195 is a binding site for [2Fe-2S] cluster. Position 447 (glutamate 447) interacts with Mg(2+). Serine 473 acts as the Proton acceptor in catalysis.

The protein belongs to the IlvD/Edd family. Homodimer. [2Fe-2S] cluster serves as cofactor. Mg(2+) is required as a cofactor.

It catalyses the reaction (2R)-2,3-dihydroxy-3-methylbutanoate = 3-methyl-2-oxobutanoate + H2O. The enzyme catalyses (2R,3R)-2,3-dihydroxy-3-methylpentanoate = (S)-3-methyl-2-oxopentanoate + H2O. Its pathway is amino-acid biosynthesis; L-isoleucine biosynthesis; L-isoleucine from 2-oxobutanoate: step 3/4. It functions in the pathway amino-acid biosynthesis; L-valine biosynthesis; L-valine from pyruvate: step 3/4. Functions in the biosynthesis of branched-chain amino acids. Catalyzes the dehydration of (2R,3R)-2,3-dihydroxy-3-methylpentanoate (2,3-dihydroxy-3-methylvalerate) into 2-oxo-3-methylpentanoate (2-oxo-3-methylvalerate) and of (2R)-2,3-dihydroxy-3-methylbutanoate (2,3-dihydroxyisovalerate) into 2-oxo-3-methylbutanoate (2-oxoisovalerate), the penultimate precursor to L-isoleucine and L-valine, respectively. This Burkholderia mallei (strain NCTC 10247) protein is Dihydroxy-acid dehydratase.